The following is a 391-amino-acid chain: RNA-binding motif protein, X chromosome (391 aa).

The residue at position 1 (Met-1) is an N-acetylmethionine; in Heterogeneous nuclear ribonucleoprotein G; alternate. Residue Val-2 is modified to N-acetylvaline; in Heterogeneous nuclear ribonucleoprotein G, N-terminally processed. The RRM domain occupies 8–86 (GKLFIGGLNT…KAIKVEQATK (79 aa)). Residue Lys-22 forms a Glycyl lysine isopeptide (Lys-Gly) (interchain with G-Cter in SUMO2) linkage. Lys-30 is modified (N6-acetyllysine). The segment covering 61–80 (DAKDAARDMNGKSLDGKAIK) has biased composition (basic and acidic residues). Positions 61 to 391 (DAKDAARDMN…SDRGGGRSRY (331 aa)) are disordered. Residues Lys-80 and Lys-86 each participate in a glycyl lysine isopeptide (Lys-Gly) (interchain with G-Cter in SUMO2) cross-link. 2 positions are modified to phosphoserine: Ser-88 and Ser-91. Residues 109 to 120 (LRGGRGGSGGTR) show a composition bias toward gly residues. 3 positions are modified to omega-N-methylarginine: Arg-125, Arg-144, and Arg-164. Over residues 151 to 164 (RGPPPRSGGPPPKR) the composition is skewed to pro residues. Ser-165 carries the phosphoserine modification. Residue Arg-172 is modified to Omega-N-methylarginine. Ser-174 is subject to Phosphoserine. Residues 186–236 (GRDSYGGPPRREPLPSRRDVYLSPRDDGYSTKDSYSSRDYPSSRDTRDYAP) form a necessary for the association to nascent RNAPII transcripts and nuclear localization region. Basic and acidic residues-rich tracts occupy residues 194–215 (PRRE…DGYS) and 241–274 (YTYR…DYSD). Ser-261, Ser-328, Ser-329, Ser-330, and Ser-332 each carry phosphoserine. A compositionally biased stretch (low complexity) spans 323 to 337 (SRDSYSSSRSDLYSS). Positions 333-391 (DLYSSGRDRVGRQERGLPPSMERGYPPPRDSYSSSSRGAPRGGGRGGSRSDRGGGRSRY) are necessary for RNA-binding. Over residues 338–347 (GRDRVGRQER) the composition is skewed to basic and acidic residues. Position 352 is a phosphoserine (Ser-352). A compositionally biased stretch (low complexity) spans 362-371 (DSYSSSSRGA). The span at 380–391 (SRSDRGGGRSRY) shows a compositional bias: basic and acidic residues.

In terms of assembly, homomultimer. Found in the supraspliceosome complex. Identified in the spliceosome C complex. Forms a complex with ILF2, ILF3, YLPM1, KHDRBS1, NCOA5 and PPP1CA. Interacts with CLK2, KHDRBS2, KHDRBS3, SAFB/SAFB1, TRA2B and YTHDC1. Interacts with ERAP1; the interaction is RNA-independent. Interacts with PPIA/CYPA. O-glycosylated. In terms of processing, arg-185 is dimethylated, probably to asymmetric dimethylarginine.

It is found in the nucleus. Its function is as follows. RNA-binding protein that plays several role in the regulation of pre- and post-transcriptional processes. Implicated in tissue-specific regulation of gene transcription and alternative splicing of several pre-mRNAs. Binds to and stimulates transcription from the tumor suppressor TXNIP gene promoter; may thus be involved in tumor suppression. When associated with SAFB, binds to and stimulates transcription from the SREBF1 promoter. Associates with nascent mRNAs transcribed by RNA polymerase II. Component of the supraspliceosome complex that regulates pre-mRNA alternative splice site selection. Can either activate or suppress exon inclusion; acts additively with TRA2B to promote exon 7 inclusion of the survival motor neuron SMN2. Represses the splicing of MAPT/Tau exon 10. Binds preferentially to single-stranded 5'-CC[A/C]-rich RNA sequence motifs localized in a single-stranded conformation; probably binds RNA as a homodimer. Binds non-specifically to pre-mRNAs. Also plays a role in the cytoplasmic TNFR1 trafficking pathways; promotes both the IL-1-beta-mediated inducible proteolytic cleavage of TNFR1 ectodomains and the release of TNFR1 exosome-like vesicles to the extracellular compartment. In Pan troglodytes (Chimpanzee), this protein is RNA-binding motif protein, X chromosome (RBMX).